The sequence spans 3019 residues: MSTLPKPQRITKRNINRRPQDVKFPGGGQIVGGVYVLPRRGPKLGVRAVRKTSERSQPRSRRQPIPRARRTEGRSWAQPGYPWPLYGNEGCGWAGWLLSPRGSRPSWGPNDPRRRSRNLGKVIDTLTCGFADLMGYIPLVGAPVGGVARALAHGVRALEDGINFATGNLPGCSFSIFLLALLSCLLTPTAGLEYRNASGLYTVTNDCSNGSIVYEAGDVILHLPGCIPCVRLNNASKCWTPVSPTVAVSRPGAATASLRTHVDMMVGAATLCSALYVGDLCGALFLVGQGFSWRHRQHWTVQDCNCSIYPGHLTGHRMAWDMMMNWSPAMTLIVSQVLRLPQTMFDLVIGAHWGVMAGVAYYSMQGNWAKVFLVLCLFSGVDASTTITGGVAASGAFTITSLFSTGAKQPLHLVNTNGSWHINRTALNCNDSLNTGFIAGLLYYHKFNSSGCVERMSACSPLDRFAQGWGPLGPANISGPSSEKPYCWHYAPRPCDTVPAQSVCGPVYCFTPSPVVVGATDKRGAPTYTWGENESDVFLLESARPPTEPWFGCTWMNGSGYVKTCGAPPCHIYGGREGKSNNSLVCPTDCFRKHPDATYNRCGAGPWLTPRCLVDYPYRLWHYPCTVNYTIFKVRMFVGGLEHRFNAACNWTRGERCNLEDRDRSEMYPLLHSTTEQAILPCSFVPIPALSTGLIHLHQNIVDVQYLYGISSGLVGWAIKWEFVILIFLLLADARVCVVLWMMMLISQAEAALENLIVLNAISAAGTHGIWWSLVAFCVAWHVRGRIFPIAVYSIVGLWPLLLLVLMLPYRAYAWTGTDTSTLGAGVLSLFALFTLSPWYKHWIARLIWWNQYTIARCEAALQIWVPPLLARGARDGIILLAGLFYPALVFDITKLLLAILGPLYILQASLVRVPYFVRAHAVVRLCILVRNITGGKYVQMVLLALARGFNTYLYDHLSPMTDWAAEGLKDLAVAVEPVIFSPMEVKVITWGADTTACGDILCGLPVSARLGKEVLLGPADDYRSMGWRLLAPITAHAQQTRGLFGTIVTSLTGRDKNIVTGEIQVLSTSTQTFLGTSVGGVMWTVYHGAGSRTLAGNKRPALQMYTNVDQDLVGWPSPPGAKSLVPCTCGSADLYLITRDADVLPARRRGDSTASLLSPRPLACLKGSSGGPIMCPSGHVAGIFRAAVCTRGVAKALQFIPVESLSAQTRSPSFSDNSTPPAVPQTFQVGYLHAPTGSGESTKVPASYVAQGYTVLVLNPSVAATLGFGRFMSHAYGIDPNVRTGTRTITTGAKLTYSTYGKFLADGGCSGGAYDVIICDECHAQDATSILGIGTVLDQAETAGARLVVLATATPPGSITVPHSNIEEVALTGEGEIPFYGRAIPLGVIKGGRHLIFCHSKKKCDELAKQLTSLGVNAVAFYRGLDVSVIPTQGDVVVCATDALITGYTGDFDSVIDCNVAVEQYVDFSLDPTFSIETHTVPQDAVSRSQRRGRTGRGKSGTYRYVSPGERPSGMFDSVVLCECYDAGCAWYELTPSETTVRLRAYLSTPGLPVCQDHLEFWEGVFTGLTHIDAHFLSQTKQQGLNFPYLTAYQATVCARAAALPPSWDETWKCLIRLKPTLHGPTPLLYRLGAVQNEICTTHPVTKYIATCMAADLEVATSAWVLLGGVMAALTAYCLSVGSVVIVGHLVLGGKPALVPDKEVLYQQYDEMEECSRAAPYIEQAQGIAQQFKEKVIGLLQQADQKAADIKPIATPYWQKLETFWSKHMWNFVSGIQYLAGLSTLPGNPAIASLMAFTASVTSPLTTNQTLLFNIMGGWVASNLAPPPASTAFVVSGLAGAAVGSIGLGKVLLDILAGYGAGVAGALVAFKIMGGEMPSTEDMVNLLPAILSPGALVVGVICAAILRRHVGPGEGAVQWMNRLIAFASRGNHVAPTHYVPESDAAAKVTALLSSLTVTQLLRRLHQWINEDYPTPCDGNWLYDIWNWVCTVLADFKLWLGAKILPKMPGIPFLSCQKGYRGTWRGDGVVSTRCPCGALLSGHVKNGTMRLVGPRWCANTWHGTFPINGYTTGPSTPAPSYAYSRALWRVASDSYVEVRKVGDFHYVTGTTDDGLKCPCQVPLPEFFTELDGVRLHRYAPVCRPLLRDDVTFTVGLNSYVIGSQLPCEPEPDVAVVTSMLQDPSHITVETAKRRLDRGSPPSLASSSASQLSAPSRKATCTTHGRHPDAELITANLLWRQEMGSNITRVESESKVVILDSFEPLRACDDEDELSVAAECFKKPPKYPPALPIWARPDYNPPLVEPWKDPDYVPPTVHGCALPPQKLPPVPPPRRKRTIVLSESTVSKALASLAEKSFPQPTCSAEDESTSGVGTQSGSLTGPVQLDDDDSDNESHSSMPPLEGEPGDPDLSSGSWSTVSGEEQSVVCCSMSYSWTGALITPCAAEEEKLPISPLSNSLLRHHNLVYSTSSRSAAQRQKKVTFDRLQVLDDHYNTTLKEIKELASGVKAELLSVEEACRLVPSHSARSKFGYGAKEVRSLSSKAINHINSVWEDLLEDNTTPIPTTIMAKNEVFAVAPHKGGRKPARLIVYPDLGVRICEKRALYDVIQKLPSAIMGSAYGFQYSPKQRVEYLLKMWNSKKTPLGFSYDTRCFDSTVTEQDIRVEESIYQACDLKDEARRVITSLTERLYCGGPMFNSKGQHCGYRRCRASGVLPTSFGNTVTCYLKAKAATKAAGIKDPSFLVCGDDLVVIAESAGIDEDKSALRAFTEAMTRYSAPPGDPPQPTYDLELITSCSSNVSVAHDGAGKRYYYLTRDPETPLARAAWETARHTPVNSWLGNIIMYAPTIWVRMVIMTHFFSILQAQEQLEKALDFEMYGAVYSVTPLDLPAIIERLHGLSAFSLHSYSPVELNRVAGALRKLGIPPLRAWRHRARAVRAKLISQGGKAKICGLYLFNWAVRTKAKLTPLPQAGLLDLSRWFTVGAGGNDIYHSVSRARSRHLLLGLLLLTVGVGIFLLPAR.

S2 carries the N-acetylserine; by host modification. The interaction with STAT1 stretch occupies residues 2-23 (STLPKPQRITKRNINRRPQDVK). The tract at residues 2-58 (STLPKPQRITKRNINRRPQDVKFPGGGQIVGGVYVLPRRGPKLGVRAVRKTSERSQP) is interaction with EIF2AK2/PKR. Residues 2–59 (STLPKPQRITKRNINRRPQDVKFPGGGQIVGGVYVLPRRGPKLGVRAVRKTSERSQPR) are interaction with DDX3X. The segment at 2 to 75 (STLPKPQRIT…PRARRTEGRS (74 aa)) is disordered. The Cytoplasmic segment spans residues 2–168 (STLPKPQRIT…EDGINFATGN (167 aa)). 2 consecutive short sequence motifs (nuclear localization signal) follow at residues 5-13 (PKPQRITKR) and 38-43 (PRRGPK). S53 bears the Phosphoserine; by host mark. Short sequence motifs (nuclear localization signal) lie at residues 58 to 64 (PRSRRQP) and 66 to 71 (PRARRT). Residues 58–68 (PRSRRQPIPRA) are compositionally biased toward basic residues. Residues S99 and S116 each carry the phosphoserine; by host modification. Residues 112–152 (PRRRSRNLGKVIDTLTCGFADLMGYIPLVGAPVGGVARALA) form an important for endoplasmic reticulum and mitochondrial localization region. Residues 122-173 (VIDTLTCGFADLMGYIPLVGAPVGGVARALAHGVRALEDGINFATGNLPGCS) are interaction with APOA2. The segment at 164–167 (FATG) is important for lipid droplets localization. Residues 169-189 (LPGCSFSIFLLALLSCLLTPT) form a helical membrane-spanning segment. A propeptide spans 178 to 191 (LLALLSCLLTPTAG) (ER anchor for the core protein, removed in mature form by host signal peptidase). Over 190 to 358 (AGLEYRNASG…IGAHWGVMAG (169 aa)) the chain is Lumenal. N196, N209, and N234 each carry an N-linked (GlcNAc...) asparagine; by host glycan. The segment at 265 to 296 (MVGAATLCSALYVGDLCGALFLVGQGFSWRHR) is important for fusion. The N-linked (GlcNAc...) asparagine; by host glycan is linked to N305. A helical transmembrane segment spans residues 359–379 (VAYYSMQGNWAKVFLVLCLFS). At 380–730 (GVDASTTITG…WEFVILIFLL (351 aa)) the chain is on the lumenal side. The interval 385–412 (TTITGGVAASGAFTITSLFSTGAKQPLH) is HVR1. N-linked (GlcNAc...) (high mannose) asparagine; by host glycosylation is found at N417, N423, and N430. Cystine bridges form between C429–C553, C452–C459, C487–C495, and C504–C509. N-linked (GlcNAc...) asparagine; by host glycosylation occurs at N448. The tract at residues 475 to 479 (ANISG) is HVR2. N-linked (GlcNAc...) asparagine; by host glycosylation is present at N476. Residues 481–494 (SSEKPYCWHYAPRP) are CD81-binding 1. The N-linked (GlcNAc...) asparagine; by host glycan is linked to N533. Residues 545–552 (PPTEPWFG) are CD81-binding 2. The N-linked (GlcNAc...) asparagine; by host glycan is linked to N557. 4 disulfide bridges follow: C565–C570, C586–C590, C602–C625, and C612–C649. 2 N-linked (GlcNAc...) (high mannose) asparagine; by host glycosylation sites follow: N628 and N650. An intrachain disulfide couples C657 to C682. Residues 665–676 (SEMYPLLHSTTE) form a PKR/eIF2-alpha phosphorylation homology domain (PePHD) region. The chain crosses the membrane as a helical span at residues 731-751 (LADARVCVVLWMMMLISQAEA). Over 752–762 (ALENLIVLNAI) the chain is Lumenal. A helical membrane pass occupies residues 763 to 783 (SAAGTHGIWWSLVAFCVAWHV). The Cytoplasmic portion of the chain corresponds to 784 to 786 (RGR). A helical membrane pass occupies residues 787-808 (IFPIAVYSIVGLWPLLLLVLML). Over 809–818 (PYRAYAWTGT) the chain is Lumenal. The chain crosses the membrane as a helical span at residues 819–839 (DTSTLGAGVLSLFALFTLSPW). Residues 840–843 (YKHW) are Cytoplasmic-facing. A helical membrane pass occupies residues 844–863 (IARLIWWNQYTIARCEAALQ). Topologically, residues 864–886 (IWVPPLLARGARDGIILLAGLFY) are lumenal. A helical membrane pass occupies residues 887–907 (PALVFDITKLLLAILGPLYIL). The Peptidase C18 domain maps to 908–1031 (QASLVRVPYF…DYRSMGWRLL (124 aa)). Topologically, residues 908-1662 (QASLVRVPYF…CMAADLEVAT (755 aa)) are cytoplasmic. A protease NS2-3 region spans residues 909–1211 (ASLVRVPYFV…PVESLSAQTR (303 aa)). C927 is lipidated: S-palmitoyl cysteine; by host. The interaction with host SCPS1 stretch occupies residues 934–954 (TGGKYVQMVLLALARGFNTYL). Residues H957, E977, and C998 each act as for protease NS2 activity; shared with dimeric partner in the active site. Residues 1032-1213 (APITAHAQQT…ESLSAQTRSP (182 aa)) enclose the Peptidase S29 domain. Residues H1088 and D1112 each act as charge relay system; for serine protease NS3 activity in the active site. Residues C1128 and C1130 each coordinate Zn(2+). S1170 (charge relay system; for serine protease NS3 activity) is an active-site residue. Residues C1176 and H1180 each contribute to the Zn(2+) site. 1235 to 1242 (APTGSGES) serves as a coordination point for ATP. Mg(2+) is bound by residues S1242 and E1322. A DECH box motif is present at residues 1321-1324 (DECH). One can recognise a Helicase C-terminal domain in the interval 1366 to 1543 (NIEEVALTGE…ELTPSETTVR (178 aa)). The tract at residues 1482–1505 (VPQDAVSRSQRRGRTGRGKSGTYR) is disordered. The interval 1491-1503 (QRRGRTGRGKSGT) is RNA-binding. A helical membrane pass occupies residues 1663 to 1683 (SAWVLLGGVMAALTAYCLSVG). The interval 1684 to 1695 (SVVIVGHLVLGG) is NS3-binding. Residues 1684 to 1810 (SVVIVGHLVL…SVTSPLTTNQ (127 aa)) lie on the Cytoplasmic side of the membrane. The helical transmembrane segment at 1811–1829 (TLLFNIMGGWVASNLAPPP) threads the bilayer. Residues 1830 to 1833 (ASTA) lie on the Lumenal side of the membrane. Residues 1834 to 1854 (FVVSGLAGAAVGSIGLGKVLL) form a helical membrane-spanning segment. D1855 is a topological domain (cytoplasmic). The helical transmembrane segment at 1856–1876 (ILAGYGAGVAGALVAFKIMGG) threads the bilayer. Residues 1877–1886 (EMPSTEDMVN) are Lumenal-facing. Residues 1887 to 1907 (LLPAILSPGALVVGVICAAIL) traverse the membrane as a helical segment. Residues 1908–1977 (RRHVGPGEGA…WINEDYPTPC (70 aa)) are Cytoplasmic-facing. A lipid anchor (S-palmitoyl cysteine; by host) is attached at C1977. Residues 1978–2007 (DGNWLYDIWNWVCTVLADFKLWLGAKILPK) lie within the membrane without spanning it. The Cytoplasmic portion of the chain corresponds to 2008–2998 (MPGIPFLSCQ…YHSVSRARSR (991 aa)). Zn(2+) is bound by residues C2016, C2034, C2036, and C2057. Residues 2125 to 2213 (EFFTELDGVR…ASSSASQLSA (89 aa)) form an FKBP8-binding region. A transcriptional activation region spans residues 2125–2337 (EFFTELDGVR…PVPPPRRKRT (213 aa)). The interaction with non-structural protein 4A stretch occupies residues 2140–2144 (PVCRP). Positions 2191 to 2225 (AKRRLDRGSPPSLASSSASQLSAPSRKATCTTHGR) are disordered. An interaction with host SKP2 region spans residues 2194–2446 (RLDRGSPPSL…ALITPCAAEE (253 aa)). A phosphoserine; by host mark is found at S2199, S2202, S2206, S2209, S2212, and S2215. Positions 2199–2215 (SPPSLASSSASQLSAPS) are enriched in low complexity. Residues 2215 to 2254 (SRKATCTTHGRHPDAELITANLLWRQEMGSNITRVESESK) are ISDR. An interaction with EIF2AK2/PKR region spans residues 2215–2280 (SRKATCTTHG…DELSVAAECF (66 aa)). The tract at residues 2254-2311 (KVVILDSFEPLRACDDEDELSVAAECFKKPPKYPPALPIWARPDYNPPLVEPWKDPDY) is NS4B-binding. The V3 stretch occupies residues 2304-2382 (EPWKDPDYVP…GTQSGSLTGP (79 aa)). An SH3-binding motif is present at residues 2327-2330 (PPVP). The Nuclear localization signal signature appears at 2332-2340 (PRRKRTIVL). Residue K2355 forms a Glycyl lysine isopeptide (Lys-Gly) (interchain with G-Cter in ubiquitin) linkage. A disordered region spans residues 2356-2417 (SFPQPTCSAE…PDLSSGSWST (62 aa)). Polar residues predominate over residues 2369-2381 (TSGVGTQSGSLTG). Residues S2457 and S2470 each carry the phosphoserine; by host modification. The region spanning 2642–2760 (PLGFSYDTRC…IAESAGIDED (119 aa)) is the RdRp catalytic domain. Mg(2+) is bound by residues D2648, D2746, and D2747. Residues 2999 to 3019 (HLLLGLLLLTVGVGIFLLPAR) form a helical membrane-spanning segment.

This sequence belongs to the hepacivirus polyprotein family. In terms of assembly, homooligomer. Interacts with E1 (via C-terminus). Interacts with the non-structural protein 5A. Interacts (via N-terminus) with host STAT1 (via SH2 domain); this interaction results in decreased STAT1 phosphorylation and ubiquitin-mediated proteasome-dependent STAT1 degradation, leading to decreased IFN-stimulated gene transcription. Interacts with host STAT3; this interaction constitutively activates STAT3. Interacts with host LTBR receptor. Interacts with host TNFRSF1A receptor and possibly induces apoptosis. Interacts with host HNRPK. Interacts with host YWHAE. Interacts with host UBE3A/E6AP. Interacts with host DDX3X. Interacts with host APOA2. Interacts with host RXRA protein. Interacts with host SP110 isoform 3/Sp110b; this interaction sequesters the transcriptional corepressor SP110 away from the nucleus. Interacts with host CREB3 nuclear transcription protein; this interaction triggers cell transformation. Interacts with host ACY3. Interacts with host C1QR1. Interacts with host RBM24; this interaction, which enhances the interaction of the mature core protein with 5'-UTR, may inhibit viral translation and favor replication. Interacts with host EIF2AK2/PKR; this interaction induces the autophosphorylation of EIF2AK2. Part of the viral assembly initiation complex composed of NS2, E1, E2, NS3, NS4A, NS5A and the mature core protein. As to quaternary structure, forms a heterodimer with envelope glycoprotein E2. Interacts with mature core protein. Interacts with protease NS2. The heterodimer E1/E2 interacts with host CLDN1; this interaction plays a role in viral entry into host cell. Interacts with host SPSB2 (via C-terminus). Part of the viral assembly initiation complex composed of NS2, E1, E2, NS3, NS4A, NS5A and the mature core protein. Interacts with host NEURL3; this interaction prevents E1 binding to glycoprotein E2. Forms a heterodimer with envelope glycoprotein E1. Interacts with host CD81 and SCARB1 receptors; these interactions play a role in viral entry into host cell. Interacts with host EIF2AK2/PKR; this interaction inhibits EIF2AK2 and probably allows the virus to evade the innate immune response. Interacts with host CD209/DC-SIGN and CLEC4M/DC-SIGNR. Interact with host SPCS1; this interaction is essential for viral particle assembly. Interacts with protease NS2. The heterodimer E1/E2 interacts with host CLDN1; this interaction plays a role in viral entry into host cell. Part of the viral assembly initiation complex composed of NS2, E1, E2, NS3, NS4A, NS5A and the mature core protein. Interacts with host SLC3A2/4F2hc; the interaction may facilitate viral entry into host cell. Interacts with human PLSCR1. In terms of assembly, homohexamer. Homoheptamer. Interacts with protease NS2. As to quaternary structure, homodimer. Interacts with host SPCS1; this interaction is essential for viral particle assembly. Interacts with envelope glycoprotein E1. Interacts with envelope glycoprotein E2. Interacts with viroporin p7. Interacts with serine protease/helicase NS3. Part of the replication complex composed of NS2, NS3, NS4A, NS4B, NS5A and the RNA-directed RNA polymerase embedded in an ER-derived membranous web. Part of the viral assembly initiation complex composed of NS2, E1, E2, NS3, NS4A, NS5A and the mature core protein. Interacts with protease NS2. Interacts with non-structural protein 4A; this interaction stabilizes the folding of NS3 serine protease. NS3-NS4A interaction is essential for NS3 activation and allows membrane anchorage of the latter. NS3/NS4A complex also prevents phosphorylation of host IRF3, thus preventing the establishment of dsRNA induced antiviral state. Interacts with host MAVS; this interaction leads to the cleavage and inhibition of host MAVS. Interacts with host TICAM1; this interaction leads to the cleavage and inhibition of host TICAM1. Interacts with host TANK-binding kinase/TBK1; this interaction results in the inhibition of the association between TBK1 and IRF3, which leads to the inhibition of IRF3 activation. Interacts with host RBM24. Part of the replication complex composed of NS2, NS3, NS4A, NS4B, NS5A and the RNA-directed RNA polymerase embedded in an ER-derived membranous web. Part of the viral assembly initiation complex composed of NS2, E1, E2, NS3, NS4A, NS5A and the mature core protein. In terms of assembly, interacts with NS3 serine protease; this interaction stabilizes the folding of NS3 serine protease. NS3-NS4A interaction is essential for NS3 activation and allows membrane anchorage of the latter. Interacts with non-structural protein 5A (via N-terminus). Part of the replication complex composed of NS2, NS3, NS4A, NS4B, NS5A and the RNA-directed RNA polymerase embedded in an ER-derived membranous web. Part of the viral assembly initiation complex composed of NS2, E1, E2, NS3, NS4A, NS5A and the mature core protein. As to quaternary structure, homomultimer. Interacts with non-structural protein NS5A. Interacts with host PLA2G4C; this interaction likely initiates the recruitment of replication complexes to lipid droplets. Interacts with host STING; this interaction disrupts the interaction between STING and TBK1 thereby suppressing the interferon signaling. Part of the replication complex composed of NS2, NS3, NS4A, NS4B, NS5A and the RNA-directed RNA polymerase embedded in an ER-derived membranous web. Monomer. Homodimer; dimerization is required for RNA-binding. Interacts with the mature core protein. Interacts (via N-terminus) with non-structural protein 4A. Interacts with non-structural protein 4B. Interacts (via region D2) with RNA-directed RNA polymerase. Part of the viral assembly initiation complex composed of NS2, E1, E2, NS3, NS4A, NS5A and the mature core protein. Part of the replication complex composed of NS2, NS3, NS4A, NS4B, NS5A and the RNA-directed RNA polymerase embedded in an ER-derived membranous web. Interacts with host GRB2. Interacts with host BIN1. Interacts with host PIK3R1. Interacts with host SRCAP. Interacts with host FKBP8. Interacts (via C-terminus) with host VAPB (via MSP domain). Interacts with host EIF2AK2/PKR; this interaction leads to disruption of EIF2AK2 dimerization by NS5A and probably allows the virus to evade the innate immune response. Interacts (via N-terminus) with host PACSIN2 (via N-terminus); this interaction attenuates protein kinase C alpha-mediated phosphorylation of PACSIN2 by disrupting the interaction between PACSIN2 and PRKCA. Interacts (via N-terminus) with host SRC kinase (via SH2 domain). Interacts with most Src-family kinases. Interacts with host IFI27 and SKP2; promotes the ubiquitin-mediated proteasomal degradation of NS5A. Interacts with host GPS2. Interacts with host TNFRSF21; this interaction allows the modulation by the virus of JNK, p38 MAPK, STAT3, and Akt signaling pathways in a DR6-dependent manner. Interacts (via N-terminus) with host CIDEB (via N-terminus); this interaction seems to regulate the association of HCV particles with APOE. Interacts with host CHKA/Choline Kinase-alpha; CHKA bridges host PI4KA and NS5A and potentiates NS5A-stimulated PI4KA activity, which then facilitates the targeting of the ternary complex to the ER for viral replication. Interacts with host SPSB2 (via C-terminus); this interaction targets NS5A for ubiquitination and degradation. Interacts with host RAB18; this interaction may promote the association of NS5A and other replicase components with lipid droplets. Interacts (via region D2) with host PPIA/CYPA; the interaction stimulates RNA-binding ability of NS5A and is dependent on the peptidyl-prolyl cis-trans isomerase activity of PPIA/CYPA. Interacts with host TRIM14; this interaction induces the degradation of NS5A. In terms of assembly, homooligomer. Interacts with non-structural protein 5A. Interacts with host VAPB. Interacts with host PRK2/PKN2. Interacts with host HNRNPA1 and SEPT6; these interactions facilitate viral replication. Part of the replication complex composed of NS2, NS3, NS4A, NS4B, NS5A and the RNA-directed RNA polymerase. It depends on Zn(2+) as a cofactor. Mg(2+) serves as cofactor. Post-translationally, specific enzymatic cleavages in vivo yield mature proteins. The structural proteins, core, E1, E2 and p7 are produced by proteolytic processing by host signal peptidases. The core protein precursor is synthesized as a 23 kDa, which is retained in the ER membrane through the hydrophobic signal peptide. Cleavage by the signal peptidase releases the 21 kDa mature core protein. The cleavage of the core protein precursor occurs between aminoacids 176 and 188 but the exact cleavage site is not known. Some degraded forms of the core protein appear as well during the course of infection. The other proteins (p7, NS2, NS3, NS4A, NS4B, NS5A and NS5B) are cleaved by the viral proteases. Autoprocessing between NS2 and NS3 is mediated by the NS2 cysteine protease catalytic domain and regulated by the NS3 N-terminal domain. Phosphorylated by host PKC and PKA. In terms of processing, ubiquitinated; mediated by UBE3A and leading to core protein subsequent proteasomal degradation. Post-translationally, highly N-glycosylated. Palmitoylation is required for NS2/3 autoprocessing and E2 recruitment to membranes. In terms of processing, palmitoylated. This modification may play a role in its polymerization or in protein-protein interactions. Post-translationally, phosphorylated on serines in a basal form termed p56. p58 is a hyperphosphorylated form of p56. p56 and p58 coexist in the cell in roughly equivalent amounts. Hyperphosphorylation is dependent on the presence of NS4A. Host CSNK1A1/CKI-alpha or RPS6KB1 kinases may be responsible for NS5A phosphorylation. Tyrosine phosphorylation is essential for the interaction with host SRC. In terms of processing, ubiquitinated. Ubiquitination, most probably at Lys-2355, mediated by host IFI27 and SKP2 leads to proteasomal degradation, restricting viral infection. Ubiquitination by host TRIM22 leads to interruption of viral replication. Post-translationally, the N-terminus is phosphorylated by host PRK2/PKN2.

It localises to the host endoplasmic reticulum membrane. Its subcellular location is the host mitochondrion membrane. The protein localises to the virion. The protein resides in the host cytoplasm. It is found in the host nucleus. It localises to the host lipid droplet. Its subcellular location is the virion membrane. The protein localises to the host mitochondrion. The protein resides in the host cell membrane. It is found in the host perinuclear region. It carries out the reaction Hydrolysis of four peptide bonds in the viral precursor polyprotein, commonly with Asp or Glu in the P6 position, Cys or Thr in P1 and Ser or Ala in P1'.. It catalyses the reaction a ribonucleoside 5'-triphosphate + H2O = a ribonucleoside 5'-diphosphate + phosphate + H(+). The enzyme catalyses ATP + H2O = ADP + phosphate + H(+). The catalysed reaction is RNA(n) + a ribonucleoside 5'-triphosphate = RNA(n+1) + diphosphate. Its activity is regulated as follows. Inhibited by the antiviral drug hexamethylene amiloride. Inhibition by amantadine appears to be genotype-dependent. Also inhibited by long-alkyl-chain iminosugar derivatives. With respect to regulation, activity is up-regulated by PRK2/PKN2-mediated phosphorylation. In terms of biological role, packages viral RNA to form a viral nucleocapsid, and promotes virion budding. Participates in the viral particle production as a result of its interaction with the non-structural protein 5A. Binds RNA and may function as a RNA chaperone to induce the RNA structural rearrangements taking place during virus replication. Modulates viral translation initiation by interacting with viral IRES and 40S ribosomal subunit. Affects various cell signaling pathways, host immunity and lipid metabolism. Prevents the establishment of cellular antiviral state by blocking the interferon-alpha/beta (IFN-alpha/beta) and IFN-gamma signaling pathways and by blocking the formation of phosphorylated STAT1 and promoting ubiquitin-mediated proteasome-dependent degradation of STAT1. Activates STAT3 leading to cellular transformation. Regulates the activity of cellular genes, including c-myc and c-fos. May repress the promoter of p53, and sequester CREB3 and SP110 isoform 3/Sp110b in the cytoplasm. Represses cell cycle negative regulating factor CDKN1A, thereby interrupting an important check point of normal cell cycle regulation. Targets transcription factors involved in the regulation of inflammatory responses and in the immune response: suppresses TNF-induced NF-kappa-B activation, and activates AP-1. Binds to dendritic cells (DCs) via C1QR1, resulting in down-regulation of T-lymphocytes proliferation. Alters lipid metabolism by interacting with hepatocellular proteins involved in lipid accumulation and storage. Induces up-regulation of FAS promoter activity, and thereby contributes to the increased triglyceride accumulation in hepatocytes (steatosis). Its function is as follows. Forms a heterodimer with envelope glycoprotein E2, which mediates virus attachment to the host cell, virion internalization through clathrin-dependent endocytosis and fusion with host membrane. Fusion with the host cell is most likely mediated by both E1 and E2, through conformational rearrangements of the heterodimer required for fusion rather than a classical class II fusion mechanism. E1/E2 heterodimer binds host apolipoproteins such as APOB and ApoE thereby forming a lipo-viro-particle (LVP). APOE associated to the LVP allows the initial virus attachment to cell surface receptors such as the heparan sulfate proteoglycans (HSPGs), syndecan-1 (SDC1), syndecan-1 (SDC2), the low-density lipoprotein receptor (LDLR) and scavenger receptor class B type I (SCARB1). The cholesterol transfer activity of SCARB1 allows E2 exposure and binding of E2 to SCARB1 and the tetraspanin CD81. E1/E2 heterodimer binding on CD81 activates the epithelial growth factor receptor (EGFR) signaling pathway. Diffusion of the complex E1-E2-EGFR-SCARB1-CD81 to the cell lateral membrane allows further interaction with Claudin 1 (CLDN1) and occludin (OCLN) to finally trigger HCV entry. Functionally, forms a heterodimer with envelope glycoprotein E1, which mediates virus attachment to the host cell, virion internalization through clathrin-dependent endocytosis and fusion with host membrane. Fusion with the host cell is most likely mediated by both E1 and E2, through conformational rearrangements of the heterodimer required for fusion rather than a classical class II fusion mechanism. The interaction between envelope glycoprotein E2 and host apolipoprotein E/APOE allows the proper assembly, maturation and infectivity of the viral particles. This interaction is probably promoted via the up-regulation of cellular autophagy by the virus. E1/E2 heterodimer binds host apolipoproteins such as APOB and APOE thereby forming a lipo-viro-particle (LVP). APOE associated to the LVP allows the initial virus attachment to cell surface receptors such as the heparan sulfate proteoglycans (HSPGs), syndecan-1 (SDC1), syndecan-1 (SDC2), the low-density lipoprotein receptor (LDLR) and scavenger receptor class B type I (SCARB1). The cholesterol transfer activity of SCARB1 allows E2 exposure and binding of E2 to SCARB1 and the tetraspanin CD81. E1/E2 heterodimer binding on CD81 activates the epithelial growth factor receptor (EGFR) signaling pathway. Diffusion of the complex E1-E2-EGFR-SCARB1-CD81 to the cell lateral membrane allows further interaction with Claudin 1 (CLDN1) and occludin (OCLN) to finally trigger HCV entry. Inhibits host EIF2AK2/PKR activation, preventing the establishment of an antiviral state. Viral ligand for CD209/DC-SIGN and CLEC4M/DC-SIGNR, which are respectively found on dendritic cells (DCs), and on liver sinusoidal endothelial cells and macrophage-like cells of lymph node sinuses. These interactions allow the capture of circulating HCV particles by these cells and subsequent facilitated transmission to permissive cells such as hepatocytes and lymphocyte subpopulations. The interaction between E2 and host amino acid transporter complex formed by SLC3A2 and SLC7A5/LAT1 may facilitate viral entry into host cell. Ion channel protein that acts as a viroporin and plays an essential role in the assembly, envelopment and secretion of viral particles. Regulates the host cell secretory pathway, which induces the intracellular retention of viral glycoproteins and favors assembly of viral particles. Creates a pore in acidic organelles and releases Ca(2+) and H(+) in the cytoplasm of infected cells, leading to a productive viral infection. High levels of cytoplasmic Ca(2+) may trigger membrane trafficking and transport of viral ER-associated proteins to viroplasms, sites of viral genome replication. This ionic imbalance induces the assembly of the inflammasome complex, which triggers the maturation of pro-IL-1beta into IL-1beta through the action of caspase-1. Targets also host mitochondria and induces mitochondrial depolarization. In addition of its role as a viroporin, acts as a lipid raft adhesion factor. In terms of biological role, cysteine protease required for the proteolytic auto-cleavage between the non-structural proteins NS2 and NS3. The N-terminus of NS3 is required for the function of NS2 protease (active region NS2-3). Promotes the initiation of viral particle assembly by mediating the interaction between structural and non-structural proteins. Its function is as follows. Displays three enzymatic activities: serine protease with a chymotrypsin-like fold, NTPase and RNA helicase. NS3 serine protease, in association with NS4A, is responsible for the cleavages of NS3-NS4A, NS4A-NS4B, NS4B-NS5A and NS5A-NS5B. The NS3/NS4A complex prevents phosphorylation of host IRF3, thus preventing the establishment of dsRNA induced antiviral state. The NS3/NS4A complex induces host amino acid transporter component SLC3A2, thus contributing to HCV propagation. NS3 RNA helicase binds to RNA and unwinds both dsDNA and dsRNA in the 3' to 5' direction, and likely resolves RNA complicated stable secondary structures in the template strand. Binds a single ATP and catalyzes the unzipping of a single base pair of dsRNA. Inhibits host antiviral proteins TBK1 and IRF3 thereby preventing the establishment of an antiviral state. Cleaves host MAVS/CARDIF thereby preventing the establishment of an antiviral state. Cleaves host TICAM1/TRIF, thereby disrupting TLR3 signaling and preventing the establishment of an antiviral state. Functionally, induces a specific membrane alteration that serves as a scaffold for the virus replication complex. This membrane alteration gives rise to the so-called ER-derived membranous web that contains the replication complex. NS4B self-interaction contributes to its function in membranous web formation. Promotes host TRIF protein degradation in a CASP8-dependent manner thereby inhibiting host TLR3-mediated interferon signaling. Disrupts the interaction between STING and TBK1 contributing to the inhibition of interferon signaling. Phosphorylated protein that is indispensable for viral replication and assembly. Both hypo- and hyperphosphorylated states are required for the viral life cycle. The hyperphosphorylated form of NS5A is an inhibitor of viral replication. Involved in RNA-binding and especially in binding to the viral genome. Zinc is essential for RNA-binding. Participates in the viral particle production as a result of its interaction with the mature viral core protein. Its interaction with host VAPB may target the viral replication complex to vesicles. Down-regulates viral IRES translation initiation. Mediates interferon resistance, presumably by interacting with and inhibiting host EIF2AK2/PKR. Prevents BIN1-induced apoptosis. Acts as a transcriptional activator of some host genes important for viral replication when localized in the nucleus. Via the interaction with host PACSIN2, modulates lipid droplet formation in order to promote virion assembly. Modulates TNFRSF21/DR6 signaling pathway for viral propagation. In terms of biological role, RNA-dependent RNA polymerase that performs primer-template recognition and RNA synthesis during viral replication. Initiates RNA transcription/replication at a flavin adenine dinucleotide (FAD), resulting in a 5'- FAD cap on viral RNAs. In this way, recognition of viral 5' RNA by host pattern recognition receptors can be bypassed, thereby evading activation of antiviral pathways. In Homo sapiens (Human), this protein is Genome polyprotein.